Here is a 362-residue protein sequence, read N- to C-terminus: Phosphoserine aminotransferase (362 aa).

L-glutamate is bound by residues S9 and R42. Residues 76–77, W102, T153, D174, and Q197 contribute to the pyridoxal 5'-phosphate site; that span reads GR. K198 is modified (N6-(pyridoxal phosphate)lysine). Pyridoxal 5'-phosphate is bound at residue 239–240; the sequence is NT.

It belongs to the class-V pyridoxal-phosphate-dependent aminotransferase family. SerC subfamily. In terms of assembly, homodimer. The cofactor is pyridoxal 5'-phosphate.

Its subcellular location is the cytoplasm. The catalysed reaction is O-phospho-L-serine + 2-oxoglutarate = 3-phosphooxypyruvate + L-glutamate. The enzyme catalyses 4-(phosphooxy)-L-threonine + 2-oxoglutarate = (R)-3-hydroxy-2-oxo-4-phosphooxybutanoate + L-glutamate. The protein operates within amino-acid biosynthesis; L-serine biosynthesis; L-serine from 3-phospho-D-glycerate: step 2/3. It participates in cofactor biosynthesis; pyridoxine 5'-phosphate biosynthesis; pyridoxine 5'-phosphate from D-erythrose 4-phosphate: step 3/5. Its function is as follows. Catalyzes the reversible conversion of 3-phosphohydroxypyruvate to phosphoserine and of 3-hydroxy-2-oxo-4-phosphonooxybutanoate to phosphohydroxythreonine. This chain is Phosphoserine aminotransferase, found in Salmonella agona (strain SL483).